The chain runs to 500 residues: Protein nucleotidyltransferase YdiU (500 aa).

ATP contacts are provided by glycine 98, glycine 100, arginine 101, lysine 124, aspartate 136, glycine 137, arginine 187, and arginine 194. Residue aspartate 263 is the Proton acceptor of the active site. Positions 264 and 273 each coordinate Mg(2+). Residue aspartate 273 participates in ATP binding.

Belongs to the SELO family. Mg(2+) is required as a cofactor. It depends on Mn(2+) as a cofactor.

It carries out the reaction L-seryl-[protein] + ATP = 3-O-(5'-adenylyl)-L-seryl-[protein] + diphosphate. The enzyme catalyses L-threonyl-[protein] + ATP = 3-O-(5'-adenylyl)-L-threonyl-[protein] + diphosphate. The catalysed reaction is L-tyrosyl-[protein] + ATP = O-(5'-adenylyl)-L-tyrosyl-[protein] + diphosphate. It catalyses the reaction L-histidyl-[protein] + UTP = N(tele)-(5'-uridylyl)-L-histidyl-[protein] + diphosphate. It carries out the reaction L-seryl-[protein] + UTP = O-(5'-uridylyl)-L-seryl-[protein] + diphosphate. The enzyme catalyses L-tyrosyl-[protein] + UTP = O-(5'-uridylyl)-L-tyrosyl-[protein] + diphosphate. In terms of biological role, nucleotidyltransferase involved in the post-translational modification of proteins. It can catalyze the addition of adenosine monophosphate (AMP) or uridine monophosphate (UMP) to a protein, resulting in modifications known as AMPylation and UMPylation. This Herminiimonas arsenicoxydans protein is Protein nucleotidyltransferase YdiU.